The following is a 207-amino-acid chain: Thaumatin-like protein 1 (207 aa).

Disulfide bonds link Cys9-Cys202, Cys50-Cys60, Cys65-Cys71, Cys117-Cys191, Cys122-Cys174, Cys130-Cys140, Cys144-Cys153, and Cys154-Cys161.

This sequence belongs to the thaumatin family. In terms of assembly, monomer. Post-translationally, not glycosylated.

It is found in the secreted. Acidic thaumatin-like protein. Exhibits weak beta-1,3-glucanase activity with laminarin as substrate. This Manilkara zapota (Sapodilla plum) protein is Thaumatin-like protein 1 (TLP1).